We begin with the raw amino-acid sequence, 384 residues long: Gastrin-releasing peptide receptor (384 aa).

At 1-38 (MALNDCFLLNLEVDHFMHCNISSHSADLPVNDDWSHPG) the chain is on the extracellular side. Asn20 carries N-linked (GlcNAc...) asparagine glycosylation. Residues 39 to 62 (ILYVIPAVYGVIILIGLIGNITLI) form a helical membrane-spanning segment. Topologically, residues 63–76 (KIFCTVKSMRNVPN) are cytoplasmic. Residues 77 to 96 (LFISSLALGDLLLLITCAPV) form a helical membrane-spanning segment. The Extracellular segment spans residues 97 to 114 (DASRYLADRWLFGRIGCK). A disulfide bridge links Cys113 with Cys196. The helical transmembrane segment at 115–136 (LIPFIQLTSVGVSVFTLTALSA) threads the bilayer. Topologically, residues 137–152 (DRYKAIVRPMDIQASH) are cytoplasmic. The chain crosses the membrane as a helical span at residues 153–174 (ALMKICLKAAFIWIISMLLAIP). Residues 175-208 (EAVFSDLHPFHEESTNQTFISCAPYPHSNELHPK) lie on the Extracellular side of the membrane. A helical transmembrane segment spans residues 209-234 (IHSMASFLVFYVIPLSIISVYYYFIA). The Cytoplasmic segment spans residues 235 to 264 (KNLIQSAYNLPVEGNIHVKKQIESRKRLAK). Residues 265–285 (TVLVFVGLFAFCWLPNHVIYL) form a helical membrane-spanning segment. The Extracellular segment spans residues 286 to 298 (YRSYHYSEVDTSM). Residues 299–325 (LHFVTSICARLLAFTNSCVNPFALYLL) form a helical membrane-spanning segment. Residues 326 to 384 (SKSFRKQFNTQLLCCQPGLIIRSHSTGRSTTCMTSLKSTNPSVATFSLINGNICHERYV) lie on the Cytoplasmic side of the membrane. A lipid anchor (S-palmitoyl cysteine) is attached at Cys339. Phosphoserine is present on Ser350.

This sequence belongs to the G-protein coupled receptor 1 family. In terms of tissue distribution, highly expressed in pancreas. Also expressed in stomach, adrenal cortex and brain. In brain, expressed in cells throughout the cortex.

Its subcellular location is the cell membrane. Functionally, receptor for gastrin-releasing peptide (GRP). Signals via association with G proteins that activate a phosphatidylinositol-calcium second messenger system, resulting in Akt phosphorylation. Contributes to the regulation of food intake. Contributes to the perception of prurient stimuli and transmission of itch signals in the spinal cord that promote scratching behavior, but does not play a role in the perception of pain. Contributes primarily to nonhistaminergic itch sensation. In one study, shown to act in the amygdala as part of an inhibitory network which inhibits memory specifically related to learned fear. In another study, shown to contribute to disinhibition of glutamatergic cells in the auditory cortex via signaling on vasoactive intestinal peptide-expressing cells which leads to enhanced auditory fear memories. Contributes to the induction of sighing through signaling in the pre-Botzinger complex, a cluster of several thousand neurons in the ventrolateral medulla responsible for inspiration during respiratory activity. The protein is Gastrin-releasing peptide receptor (GRPR) of Homo sapiens (Human).